Consider the following 378-residue polypeptide: Plant intracellular Ras-group-related LRR protein 8 (378 aa).

In terms of domain architecture, Ubiquitin-like spans 10 to 86 (PTITVQVKFG…VMLMASQGLH (77 aa)). Residues 85–120 (LHQGDGPITKNSSVPAPSTRRASNVKEAQIQKSDTN) are disordered. Residues 93-106 (TKNSSVPAPSTRRA) are compositionally biased toward polar residues. LRR repeat units follow at residues 129 to 152 (WKAT…VWGC), 153 to 176 (GSSI…IAAL), 178 to 201 (SLQK…GLTC), 202 to 225 (VQTL…LGSI), 226 to 250 (THLR…LLKH), 252 to 271 (EILI…IGGC), 272 to 293 (ESLN…AFGN), 294 to 317 (LQHL…FFIK), and 319 to 344 (SQLI…GWEE).

The protein belongs to the SHOC2 family. Widely expressed except in panicles.

Leucine-rich repeat protein that likely mediates protein interactions, possibly in the context of signal transduction. The chain is Plant intracellular Ras-group-related LRR protein 8 (IRL8) from Oryza sativa subsp. japonica (Rice).